A 322-amino-acid polypeptide reads, in one-letter code: Fructose-1,6-bisphosphatase class 1 1 (322 aa).

Mg(2+)-binding residues include E84, D103, L105, and D106. Substrate is bound by residues 106-109 (DGSS), N198, and K264. E270 contributes to the Mg(2+) binding site.

This sequence belongs to the FBPase class 1 family. Homotetramer. Requires Mg(2+) as cofactor.

It is found in the cytoplasm. It carries out the reaction beta-D-fructose 1,6-bisphosphate + H2O = beta-D-fructose 6-phosphate + phosphate. It functions in the pathway carbohydrate biosynthesis; gluconeogenesis. The protein is Fructose-1,6-bisphosphatase class 1 1 of Pseudoalteromonas translucida (strain TAC 125).